A 252-amino-acid chain; its full sequence is 3-dehydroquinate dehydratase (252 aa).

3-dehydroquinate contacts are provided by residues Ser21, 46–48, and Arg82; that span reads EWR. The Proton donor/acceptor role is filled by His143. Lys170 serves as the catalytic Schiff-base intermediate with substrate. 3 residues coordinate 3-dehydroquinate: Arg213, Ser232, and Gln236.

It belongs to the type-I 3-dehydroquinase family. Homodimer.

It carries out the reaction 3-dehydroquinate = 3-dehydroshikimate + H2O. It functions in the pathway metabolic intermediate biosynthesis; chorismate biosynthesis; chorismate from D-erythrose 4-phosphate and phosphoenolpyruvate: step 3/7. Involved in the third step of the chorismate pathway, which leads to the biosynthesis of aromatic amino acids. Catalyzes the cis-dehydration of 3-dehydroquinate (DHQ) and introduces the first double bond of the aromatic ring to yield 3-dehydroshikimate. The polypeptide is 3-dehydroquinate dehydratase (Shigella flexneri serotype 5b (strain 8401)).